The primary structure comprises 882 residues: Valine--tRNA ligase (882 aa).

The short motif at 50–60 (PNVTGKLHLGH) is the 'HIGH' region element. The 'KMSKS' region motif lies at 526–530 (KMSKS). Lys529 serves as a coordination point for ATP. Positions 810 to 881 (LEALIDLDLE…VLERIETLKE (72 aa)) form a coiled coil.

Belongs to the class-I aminoacyl-tRNA synthetase family. ValS type 1 subfamily. As to quaternary structure, monomer.

It localises to the cytoplasm. It carries out the reaction tRNA(Val) + L-valine + ATP = L-valyl-tRNA(Val) + AMP + diphosphate. In terms of biological role, catalyzes the attachment of valine to tRNA(Val). As ValRS can inadvertently accommodate and process structurally similar amino acids such as threonine, to avoid such errors, it has a 'posttransfer' editing activity that hydrolyzes mischarged Thr-tRNA(Val) in a tRNA-dependent manner. In Listeria innocua serovar 6a (strain ATCC BAA-680 / CLIP 11262), this protein is Valine--tRNA ligase.